The primary structure comprises 464 residues: ATP synthase subunit beta (464 aa).

153–160 contributes to the ATP binding site; sequence GGAGVGKT.

The protein belongs to the ATPase alpha/beta chains family. F-type ATPases have 2 components, CF(1) - the catalytic core - and CF(0) - the membrane proton channel. CF(1) has five subunits: alpha(3), beta(3), gamma(1), delta(1), epsilon(1). CF(0) has three main subunits: a(1), b(2) and c(9-12). The alpha and beta chains form an alternating ring which encloses part of the gamma chain. CF(1) is attached to CF(0) by a central stalk formed by the gamma and epsilon chains, while a peripheral stalk is formed by the delta and b chains.

Its subcellular location is the cell membrane. It catalyses the reaction ATP + H2O + 4 H(+)(in) = ADP + phosphate + 5 H(+)(out). Functionally, produces ATP from ADP in the presence of a proton gradient across the membrane. The catalytic sites are hosted primarily by the beta subunits. The sequence is that of ATP synthase subunit beta from Clostridium novyi (strain NT).